A 223-amino-acid chain; its full sequence is MLPNGLIVSCQALPDEPLHSSFIMSKMALAAYQGGAVGIRANTKEDILAIREEVSLPVIGIVKRDYEGSNVFITATSKEVDELIESGCEVIALDATTQTRPKESLEELVHYIREKAPHVEIMADISTVEEAINADHLNFDYIGTTLRGYTSYTKGHILFENDFEFLKEVLEKVNAKVIAEGNVITPEMYKKVSDLGVHCTVVGGAITRPKQITERFIEAVQQK.

It belongs to the NanE family.

It catalyses the reaction an N-acyl-D-glucosamine 6-phosphate = an N-acyl-D-mannosamine 6-phosphate. It functions in the pathway amino-sugar metabolism; N-acetylneuraminate degradation; D-fructose 6-phosphate from N-acetylneuraminate: step 3/5. In terms of biological role, converts N-acetylmannosamine-6-phosphate (ManNAc-6-P) to N-acetylglucosamine-6-phosphate (GlcNAc-6-P). This Staphylococcus haemolyticus (strain JCSC1435) protein is Putative N-acetylmannosamine-6-phosphate 2-epimerase.